The primary structure comprises 483 residues: Probable cobyric acid synthase (483 aa).

A GATase cobBQ-type domain is found at 247-433 (ELHIQIIKLP…LHGIFHNFAF (187 aa)). The active-site Nucleophile is the C325. Residue H425 is part of the active site.

This sequence belongs to the CobB/CobQ family. CobQ subfamily.

Its pathway is cofactor biosynthesis; adenosylcobalamin biosynthesis. Catalyzes amidations at positions B, D, E, and G on adenosylcobyrinic A,C-diamide. NH(2) groups are provided by glutamine, and one molecule of ATP is hydrogenolyzed for each amidation. The polypeptide is Probable cobyric acid synthase (Thermococcus gammatolerans (strain DSM 15229 / JCM 11827 / EJ3)).